A 204-amino-acid polypeptide reads, in one-letter code: MIGKLKGTIDEIGEDYVLVDVHGVCYVAHCSARTLSKLGSAGEACVLFIETYVREDQLKLFGFMTALEREWFNLLQSVQGVGAKVALAVLSTLTPSELANAIALQDRAAVSRAPGVGPKVAMRLVTELKNRAPAFAGEAINIALKQELGEGVAAAPVADAVSALTNLGYSRDQAANAVAAAMKTAGDGADSAKLIRLGLKELAR.

The domain I stretch occupies residues 1 to 64 (MIGKLKGTID…EDQLKLFGFM (64 aa)). The tract at residues 65–143 (TALEREWFNL…AFAGEAINIA (79 aa)) is domain II. The interval 144 to 151 (LKQELGEG) is flexible linker. The tract at residues 152-204 (VAAAPVADAVSALTNLGYSRDQAANAVAAAMKTAGDGADSAKLIRLGLKELAR) is domain III.

It belongs to the RuvA family. As to quaternary structure, homotetramer. Forms an RuvA(8)-RuvB(12)-Holliday junction (HJ) complex. HJ DNA is sandwiched between 2 RuvA tetramers; dsDNA enters through RuvA and exits via RuvB. An RuvB hexamer assembles on each DNA strand where it exits the tetramer. Each RuvB hexamer is contacted by two RuvA subunits (via domain III) on 2 adjacent RuvB subunits; this complex drives branch migration. In the full resolvosome a probable DNA-RuvA(4)-RuvB(12)-RuvC(2) complex forms which resolves the HJ.

The protein localises to the cytoplasm. Functionally, the RuvA-RuvB-RuvC complex processes Holliday junction (HJ) DNA during genetic recombination and DNA repair, while the RuvA-RuvB complex plays an important role in the rescue of blocked DNA replication forks via replication fork reversal (RFR). RuvA specifically binds to HJ cruciform DNA, conferring on it an open structure. The RuvB hexamer acts as an ATP-dependent pump, pulling dsDNA into and through the RuvAB complex. HJ branch migration allows RuvC to scan DNA until it finds its consensus sequence, where it cleaves and resolves the cruciform DNA. This is Holliday junction branch migration complex subunit RuvA from Rhizobium etli (strain CIAT 652).